The following is a 180-amino-acid chain: Nucleoside triphosphate/diphosphate phosphatase (180 aa).

Arg-26 functions as the Proton donor in the catalytic mechanism. Mg(2+)-binding residues include Asn-90, Asp-106, Asp-108, Asp-110, Asp-123, and Glu-126.

It belongs to the Ntdp family. The cofactor is Mg(2+).

It catalyses the reaction a ribonucleoside 5'-triphosphate + H2O = a ribonucleoside 5'-diphosphate + phosphate + H(+). It carries out the reaction a ribonucleoside 5'-diphosphate + H2O = a ribonucleoside 5'-phosphate + phosphate + H(+). In terms of biological role, has nucleoside phosphatase activity towards nucleoside triphosphates and nucleoside diphosphates. This chain is Nucleoside triphosphate/diphosphate phosphatase, found in Staphylococcus epidermidis (strain ATCC 35984 / DSM 28319 / BCRC 17069 / CCUG 31568 / BM 3577 / RP62A).